Consider the following 315-residue polypeptide: Microtubule-associated protein Jupiter (315 aa).

Polar residues predominate over residues 1–14 (MISNFDCTDNQASS). Disordered regions lie at residues 1–37 (MISNFDCTDNQASSKVLRPPGGGSSDIFGSEMPQTPR) and 51–89 (EKDNGVKNNGDAPRRGQKTVDSHSRLFGEPTRPITPGKN). Position 24 is a phosphoserine (S24). T35 is modified (phosphothreonine). Residues 62–76 (APRRGQKTVDSHSRL) show a composition bias toward basic and acidic residues. Phosphothreonine occurs at positions 81 and 85. 3 positions are modified to phosphoserine: S94, S122, and S133. Disordered stretches follow at residues 116 to 166 (YNGK…ADDA) and 272 to 315 (EGNP…SGLW). Residues 120–133 (SGSVSSASSSVSSS) show a composition bias toward low complexity. 2 stretches are compositionally biased toward polar residues: residues 134-148 (TENLKMNSGSRSVFR) and 285-296 (DFTQRQESSNGG).

Belongs to the MAP Jupiter family.

The protein localises to the nucleus. Its subcellular location is the cytoplasm. The protein resides in the cytoskeleton. It is found in the spindle. Functionally, binds to all microtubule populations. The protein is Microtubule-associated protein Jupiter of Drosophila sechellia (Fruit fly).